The chain runs to 229 residues: NAD(P)H-hydrate epimerase (229 aa).

Positions 10–217 (AINVDLELFN…ALQRKYELNL (208 aa)) constitute a YjeF N-terminal domain. 60-64 (NNGGD) lines the (6S)-NADPHX pocket. K(+) contacts are provided by asparagine 61 and aspartate 125. (6S)-NADPHX-binding positions include 129–135 (GFSFKPP) and aspartate 158. K(+) is bound at residue serine 161.

Belongs to the NnrE/AIBP family. Requires K(+) as cofactor.

The enzyme catalyses (6R)-NADHX = (6S)-NADHX. It catalyses the reaction (6R)-NADPHX = (6S)-NADPHX. In terms of biological role, catalyzes the epimerization of the S- and R-forms of NAD(P)HX, a damaged form of NAD(P)H that is a result of enzymatic or heat-dependent hydration. This is a prerequisite for the S-specific NAD(P)H-hydrate dehydratase to allow the repair of both epimers of NAD(P)HX. In Drosophila virilis (Fruit fly), this protein is NAD(P)H-hydrate epimerase.